A 259-amino-acid polypeptide reads, in one-letter code: Protein N-terminal and lysine N-methyltransferase efm7 (259 aa).

S-adenosyl-L-methionine contacts are provided by residues W56, 83 to 85 (GAA), D105, W139, and A163.

The protein belongs to the class I-like SAM-binding methyltransferase superfamily. EFM7 family.

The protein resides in the cytoplasm. In terms of biological role, S-adenosyl-L-methionine-dependent protein methyltransferase that trimethylates the N-terminal glycine 'Gly-2' of elongation factor 1-alpha, before also catalyzing the mono- and dimethylation of 'Lys-3'. This chain is Protein N-terminal and lysine N-methyltransferase efm7, found in Aspergillus fumigatus (strain ATCC MYA-4609 / CBS 101355 / FGSC A1100 / Af293) (Neosartorya fumigata).